A 278-amino-acid polypeptide reads, in one-letter code: HTH-type transcriptional activator RhaS (278 aa).

The HTH araC/xylS-type domain occupies 174 to 272 (NHLIAWLEDH…GWSPREIRQG (99 aa)). 2 DNA-binding regions (H-T-H motif) span residues 191 to 212 (EAIA…KQHT) and 239 to 262 (VTHI…RREF).

Binds DNA as a dimer.

It localises to the cytoplasm. Its function is as follows. Activates expression of the rhaBAD and rhaT operons. The chain is HTH-type transcriptional activator RhaS from Escherichia fergusonii (strain ATCC 35469 / DSM 13698 / CCUG 18766 / IAM 14443 / JCM 21226 / LMG 7866 / NBRC 102419 / NCTC 12128 / CDC 0568-73).